The sequence spans 364 residues: S-adenosylmethionine:tRNA ribosyltransferase-isomerase (364 aa).

It belongs to the QueA family. As to quaternary structure, monomer.

The protein localises to the cytoplasm. The enzyme catalyses 7-aminomethyl-7-carbaguanosine(34) in tRNA + S-adenosyl-L-methionine = epoxyqueuosine(34) in tRNA + adenine + L-methionine + 2 H(+). The protein operates within tRNA modification; tRNA-queuosine biosynthesis. Transfers and isomerizes the ribose moiety from AdoMet to the 7-aminomethyl group of 7-deazaguanine (preQ1-tRNA) to give epoxyqueuosine (oQ-tRNA). In Bradyrhizobium sp. (strain ORS 278), this protein is S-adenosylmethionine:tRNA ribosyltransferase-isomerase.